The primary structure comprises 259 residues: Synaptophysin-like protein 1 (259 aa).

Topologically, residues 1 to 33 (MAPNIYLVRQRISRLGQRMSGFQINLNPLKEPL) are cytoplasmic. Positions 28 to 237 (PLKEPLGFIK…NAWFVYKETS (210 aa)) constitute an MARVEL domain. A helical membrane pass occupies residues 34 to 54 (GFIKVLEWIASIFAFATCGGF). At 55 to 116 (KGQTEIQVNC…LIGDYSSSAQ (62 aa)) the chain is on the vesicular side. Asparagine 71 is a glycosylation site (N-linked (GlcNAc...) asparagine). The helical transmembrane segment at 117–137 (FYVTFAVFVFLYCIAALLLYV) threads the bilayer. At 138 to 150 (GYTSLYLDSRKLP) the chain is on the cytoplasmic side. Residues 151–171 (MIDFVVTLVATFLWLVSTSAW) traverse the membrane as a helical segment. Residues 172–212 (AKALTDIKIATGHNIIDELPPCKKKAVLCYFGSVTSMGSLN) lie on the Vesicular side of the membrane. Residue asparagine 212 is glycosylated (N-linked (GlcNAc...) asparagine). A helical membrane pass occupies residues 213–233 (VSVIFGFLNMILWGGNAWFVY). Residues 234-259 (KETSLHSPSNTSAPHSQGGIPPPTGI) are Cytoplasmic-facing.

The protein belongs to the synaptophysin/synaptobrevin family.

Its subcellular location is the cytoplasmic vesicle membrane. It localises to the melanosome. This is Synaptophysin-like protein 1 (SYPL1) from Homo sapiens (Human).